Consider the following 291-residue polypeptide: Porphobilinogen deaminase (291 aa).

The residue at position 237 (cysteine 237) is an S-(dipyrrolylmethanemethyl)cysteine.

Belongs to the HMBS family. As to quaternary structure, monomer. The cofactor is dipyrromethane.

The enzyme catalyses 4 porphobilinogen + H2O = hydroxymethylbilane + 4 NH4(+). It participates in porphyrin-containing compound metabolism; protoporphyrin-IX biosynthesis; coproporphyrinogen-III from 5-aminolevulinate: step 2/4. Functionally, tetrapolymerization of the monopyrrole PBG into the hydroxymethylbilane pre-uroporphyrinogen in several discrete steps. This Clostridium perfringens (strain ATCC 13124 / DSM 756 / JCM 1290 / NCIMB 6125 / NCTC 8237 / Type A) protein is Porphobilinogen deaminase.